The primary structure comprises 391 residues: 8-amino-7-oxononanoate synthase (391 aa).

Arg19 contributes to the substrate binding site. A pyridoxal 5'-phosphate-binding site is contributed by 106 to 107 (GY). Residue His131 participates in substrate binding. Ser178, His206, and Thr234 together coordinate pyridoxal 5'-phosphate. An N6-(pyridoxal phosphate)lysine modification is found at Lys237. Thr353 contributes to the substrate binding site.

This sequence belongs to the class-II pyridoxal-phosphate-dependent aminotransferase family. BioF subfamily. In terms of assembly, homodimer. The cofactor is pyridoxal 5'-phosphate.

It carries out the reaction 6-carboxyhexanoyl-[ACP] + L-alanine + H(+) = (8S)-8-amino-7-oxononanoate + holo-[ACP] + CO2. The protein operates within cofactor biosynthesis; biotin biosynthesis. In terms of biological role, catalyzes the decarboxylative condensation of pimeloyl-[acyl-carrier protein] and L-alanine to produce 8-amino-7-oxononanoate (AON), [acyl-carrier protein], and carbon dioxide. This chain is 8-amino-7-oxononanoate synthase, found in Geobacter sulfurreducens (strain ATCC 51573 / DSM 12127 / PCA).